The primary structure comprises 303 residues: MSFTVAVKEEILGQHHLSRHELSAIIKMSGSIGLSTSGLTLSVVTENAKLARHLYESFLHFYEIKSEIRHHQRSNLRKNRVYTVFTDEKVQDLLSDLHLADSFFGLETGIDEAILSDEEAGRAYLCGAFLANGSIRDPESGKYQLEISSVYLDHAQGIASLLQQFLLDAKVLERKKGAVTYLQRAEDIMDFLIVIGAMQARDDFERVKILRETRNDLNRANNAETANIARTVSASMKTINNISKIKDIMGLENLPVDLQEVAQLRIQHPDYSIQQLADSLSTPLTKSGVNHRLRKINKIADEL.

Positions 272–303 form a DNA-binding region, H-T-H motif; that stretch reads SIQQLADSLSTPLTKSGVNHRLRKINKIADEL.

Belongs to the WhiA family.

Functionally, involved in cell division and chromosome segregation. The chain is Probable cell division protein WhiA from Streptococcus pneumoniae (strain ATCC 700669 / Spain 23F-1).